We begin with the raw amino-acid sequence, 143 residues long: ATP synthase subunit b' (143 aa).

Residues 6–26 (ATLPLMALQFLVLAVVLNAVF) form a helical membrane-spanning segment.

This sequence belongs to the ATPase B chain family. In terms of assembly, F-type ATPases have 2 components, F(1) - the catalytic core - and F(0) - the membrane proton channel. F(1) has five subunits: alpha(3), beta(3), gamma(1), delta(1), epsilon(1). F(0) has four main subunits: a(1), b(1), b'(1) and c(10-14). The alpha and beta chains form an alternating ring which encloses part of the gamma chain. F(1) is attached to F(0) by a central stalk formed by the gamma and epsilon chains, while a peripheral stalk is formed by the delta, b and b' chains.

The protein localises to the cellular thylakoid membrane. Its function is as follows. F(1)F(0) ATP synthase produces ATP from ADP in the presence of a proton or sodium gradient. F-type ATPases consist of two structural domains, F(1) containing the extramembraneous catalytic core and F(0) containing the membrane proton channel, linked together by a central stalk and a peripheral stalk. During catalysis, ATP synthesis in the catalytic domain of F(1) is coupled via a rotary mechanism of the central stalk subunits to proton translocation. Functionally, component of the F(0) channel, it forms part of the peripheral stalk, linking F(1) to F(0). The b'-subunit is a diverged and duplicated form of b found in plants and photosynthetic bacteria. This Gloeothece citriformis (strain PCC 7424) (Cyanothece sp. (strain PCC 7424)) protein is ATP synthase subunit b'.